Here is a 126-residue protein sequence, read N- to C-terminus: MFKFVMILAVVGVATALAPVSRSDDVHADVLSRSDDVRADGFDSSLHTSNGIEQAASGDAHGNIHGNFGWISPEGEHVEVKYVANENGYQPSGAWIPTPPPIPEAIARAVAWLESHPPAPEHPRHH.

The signal sequence occupies residues 1–16; it reads MFKFVMILAVVGVATA. One can recognise a Chitin-binding type R&amp;R domain in the interval 39–100; that stretch reads ADGFDSSLHT…PSGAWIPTPP (62 aa).

Functionally, component of the larval cuticle. The sequence is that of Larval cuticle protein 2 (Lcp2) from Drosophila melanogaster (Fruit fly).